We begin with the raw amino-acid sequence, 528 residues long: Peptide chain release factor 3 (528 aa).

One can recognise a tr-type G domain in the interval 10–278; the sequence is DKRRTFGIIS…TFVDLAPAPQ (269 aa). Residues 19–26, 87–91, and 141–144 contribute to the GTP site; these read SHPDAGKT, DTPGH, and NKLD.

Belongs to the TRAFAC class translation factor GTPase superfamily. Classic translation factor GTPase family. PrfC subfamily.

It localises to the cytoplasm. Functionally, increases the formation of ribosomal termination complexes and stimulates activities of RF-1 and RF-2. It binds guanine nucleotides and has strong preference for UGA stop codons. It may interact directly with the ribosome. The stimulation of RF-1 and RF-2 is significantly reduced by GTP and GDP, but not by GMP. This is Peptide chain release factor 3 from Oleidesulfovibrio alaskensis (strain ATCC BAA-1058 / DSM 17464 / G20) (Desulfovibrio alaskensis).